The chain runs to 300 residues: NADH-ubiquinone oxidoreductase chain 2 (300 aa).

9 consecutive transmembrane segments (helical) span residues 4–24 (FFCIFVVFLCVLNFFTSNVLV), 29–49 (FLLMTVVFVCLSKGSGSYVGI), 58–78 (SLGLFFLVFNVFLLQFFIVMM), 87–107 (FWVFSVTGSLYDWLLMWFLTF), 122–142 (FSAFFIFLFGICVCYFQLFVL), 165–185 (FLSVVNVIYLFFYYVVLMAFL), 201–221 (VLLVFLNVPFSVSFFIKIFVL), 231–251 (FLLFLLLMMFLSMLCFSLWLV), and 267–287 (VLFFLVFPMMVFSVIYYFSKI).

The protein belongs to the complex I subunit 2 family.

Its subcellular location is the mitochondrion inner membrane. The catalysed reaction is a ubiquinone + NADH + 5 H(+)(in) = a ubiquinol + NAD(+) + 4 H(+)(out). Functionally, core subunit of the mitochondrial membrane respiratory chain NADH dehydrogenase (Complex I) that is believed to belong to the minimal assembly required for catalysis. Complex I functions in the transfer of electrons from NADH to the respiratory chain. The immediate electron acceptor for the enzyme is believed to be ubiquinone. The polypeptide is NADH-ubiquinone oxidoreductase chain 2 (ND2) (Ascaris suum (Pig roundworm)).